The following is a 318-amino-acid chain: MTLSLIIKWGGQEFPLSALSEEDTVLDLKHSLKSLTGVLPERMKLLGLKYKGKPAENDVKLGVLRLKPNTKIMMMGTREESLEEMMAPPPDNDEVVNDFDIDEEVVEVENREENLAKISRRVKDYKVEVLNPPREGKKLLVLDVDYTLFDHRSCAETGQELMRPYLHEFLSSAYEDYDIVIWSATSMKWIEAKMKELGVTTNANYKITFMLDSAAMITVHTPRRGLVDVKPLGVIWGKYGEFYSKNNTIMFDDIGRNFLMNPQNGLKIRPFMKAHLNRDKDKELVKLSQYLKEIAQLDDLSELNHKHWERYLAKKQGQ.

Residues 3–81 (LSLIIKWGGQ…IMMMGTREES (79 aa)) enclose the Ubiquitin-like domain. Positions 133-294 (PREGKKLLVL…VKLSQYLKEI (162 aa)) constitute an FCP1 homology domain. D143, D145, and D253 together coordinate Mg(2+).

Mg(2+) is required as a cofactor.

The protein resides in the nucleus. The enzyme catalyses O-phospho-L-seryl-[protein] + H2O = L-seryl-[protein] + phosphate. It catalyses the reaction O-phospho-L-threonyl-[protein] + H2O = L-threonyl-[protein] + phosphate. In terms of biological role, dephosphorylates 26S nuclear proteasomes, thereby decreasing their proteolytic activity. Recruited to the 19S regulatory particle of the 26S proteasome where it dephosphorylates 19S component psmc2 which impairs psmc2 ATPase activity and disrupts 26S proteasome assembly. Has also been reported to stimulate the proteolytic activity of the 26S proteasome. The polypeptide is Ubiquitin-like domain-containing CTD phosphatase 1 (ublcp1) (Xenopus laevis (African clawed frog)).